The sequence spans 561 residues: Putative transport protein YbjL (561 aa).

Transmembrane regions (helical) follow at residues 8–28 (LLNGNYILLLFVVLALGLCLG), 32–52 (LGSVQLGNSIGVLVVSLLLGQ), 66–86 (FMLFIFCVGVEAGPNFFSIFF), 94–114 (MLALVMVGSALLIALGLGKLF), and 158–178 (NLSLGYALTYLIGLVSLIVGA). 2 consecutive RCK C-terminal domains span residues 200–288 (RGLD…SFRN) and 292–373 (VFDR…RIGF). The next 5 membrane-spanning stretches (helical) occupy residues 383 to 403 (LLAFCAFFIIGLMIGMITFQF), 406 to 426 (FSFGIGNAAGLLFAGIMLGFL), 447 to 467 (FGLMVFMAGVGLSAGSGINNG), 475 to 495 (MLIAGLVVSLVPVVICFLFGA), and 537 to 557 (GTYAIANVLLTLAGTLIVIIW).

It belongs to the AAE transporter (TC 2.A.81) family. YbjL subfamily.

The protein localises to the cell membrane. The protein is Putative transport protein YbjL of Salmonella choleraesuis (strain SC-B67).